The following is a 294-amino-acid chain: Elongation factor Ts, mitochondrial 2 (294 aa).

Belongs to the EF-Ts family.

Its subcellular location is the mitochondrion. Functionally, associates with the EF-Tu.GDP complex and induces the exchange of GDP to GTP. It remains bound to the aminoacyl-tRNA.EF-Tu.GTP complex up to the GTP hydrolysis stage on the ribosome. In Paramecium tetraurelia, this protein is Elongation factor Ts, mitochondrial 2.